We begin with the raw amino-acid sequence, 399 residues long: MDDFDRDLDNELEFSHKSTKNVKVHATFESMNLKPDLLKGIYGYGFEAPSAIQSRAIMQIINGRDTIAQAQSGTGKTATFSIGMLQAIDTNAKDCQALILSPTRELAVQIQNVVKHLGDYMNIHTHACIGGTHVGDDIKKLKQGQQIVSGTPGRVVDMVKRQQLSTRNIKMLILDEADELFTKGFKEQIYEVYKYLPPSVQVVVVSATLSREVLEMTNKFTTDPVKILVKRDQITLEGIKQYHVQCEKEDWKFDTLCDLYDNLTITQAVIFCNTKLKVNWLTDQMRKQNFTVVSMHGDMKQDERDSIMNDFRTGNSRVLISTDVWARGIDVQQVSLVINYDLPTDKENYIHRIGRSGRFGRKGVAINLITKEDVATLRDFEKYYSTKIREMPMNINDIM.

The short motif at 26–54 (ATFESMNLKPDLLKGIYGYGFEAPSAIQS) is the Q motif element. Residues 57–227 (IMQIINGRDT…NKFTTDPVKI (171 aa)) enclose the Helicase ATP-binding domain. 70–77 (AQSGTGKT) contributes to the ATP binding site. The DEAD box motif lies at 175–178 (DEAD). The Helicase C-terminal domain maps to 238–399 (GIKQYHVQCE…EMPMNINDIM (162 aa)).

This sequence belongs to the DEAD box helicase family. DDX48/FAL1 subfamily.

The protein localises to the nucleus. It is found in the nucleolus. It catalyses the reaction ATP + H2O = ADP + phosphate + H(+). ATP-dependent RNA helicase involved in 40S ribosomal subunit biogenesis. Required for the processing and cleavage of 35S pre-rRNA at sites A0, A1, and A2, leading to mature 18S rRNA. The polypeptide is ATP-dependent RNA helicase FAL1 (FAL1) (Scheffersomyces stipitis (strain ATCC 58785 / CBS 6054 / NBRC 10063 / NRRL Y-11545) (Yeast)).